We begin with the raw amino-acid sequence, 133 residues long: Antifungal protein ginkbilobin-like protein 1 (133 aa).

A signal peptide spans 1–24; sequence MSMGSFGFALAVMVLAVLVASAAG. The Gnk2-homologous domain occupies 28–133; it reads TNFVSSACNT…CFIRYEQYSI (106 aa). 3 disulfides stabilise this stretch: Cys35-Cys111, Cys87-Cys96, and Cys99-Cys124. Asn36 contacts alpha-D-mannopyranose. 2 residues coordinate alpha-D-mannopyranose: Arg118 and Glu129.

Functionally, exerts antifungal activity through its carbohydrate-binding specificity. The chain is Antifungal protein ginkbilobin-like protein 1 from Picea sitchensis (Sitka spruce).